We begin with the raw amino-acid sequence, 151 residues long: Neuroglobin (151 aa).

A Globin domain is found at 1–149 (MERPEPELIR…VVQAMSRGWD (149 aa)). Heme b-binding residues include H64 and H96.

This sequence belongs to the globin family. Monomer. Homodimer and homotetramer; disulfide-linked. Mainly monomeric but also detected as part of homodimers and homotetramers. Interacts with 14-3-3 proteins; regulates the phosphorylation of NGB. Could interact (ferrous form) with G-alpha(i) proteins (GTP-bound form). Post-translationally, phosphorylated during hypoxia by ERK1/ERK2. Phosphorylation regulates the heme pocket hexacoordination preventing the association of His-64 with the heme metal center. Thereby, promotes the access of dioxygen and nitrite to the heme and stimulates the nitrite reductase activity. Phosphorylation during hypoxia is stabilized by 14-3-3 proteins.

It is found in the cytoplasm. It localises to the cytosol. Its subcellular location is the mitochondrion matrix. The catalysed reaction is Fe(III)-heme b-[protein] + nitric oxide + H2O = Fe(II)-heme b-[protein] + nitrite + 2 H(+). Monomeric globin with a bis-histidyl six-coordinate heme-iron atom through which it can bind dioxygen, carbon monoxide and nitric oxide. Could help transport oxygen and increase its availability to the metabolically active neuronal tissues, though its low quantity in tissues as well as its high affinity for dioxygen, which may limit its oxygen-releasing ability, argue against it. The ferrous/deoxygenated form exhibits a nitrite reductase activity and it could produce nitric oxide which in turn inhibits cellular respiration in response to hypoxia. In its ferrous/deoxygenated state, it may also exhibit GDI (Guanine nucleotide Dissociation Inhibitor) activity toward heterotrimeric G-alpha proteins, thereby regulating signal transduction to facilitate neuroprotective responses in the wake of hypoxia and associated oxidative stress. This is Neuroglobin from Canis lupus familiaris (Dog).